Reading from the N-terminus, the 513-residue chain is ATP synthase subunit alpha (513 aa).

Residue 169–176 coordinates ATP; sequence GDRQTGKT.

This sequence belongs to the ATPase alpha/beta chains family. In terms of assembly, F-type ATPases have 2 components, CF(1) - the catalytic core - and CF(0) - the membrane proton channel. CF(1) has five subunits: alpha(3), beta(3), gamma(1), delta(1), epsilon(1). CF(0) has three main subunits: a(1), b(2) and c(9-12). The alpha and beta chains form an alternating ring which encloses part of the gamma chain. CF(1) is attached to CF(0) by a central stalk formed by the gamma and epsilon chains, while a peripheral stalk is formed by the delta and b chains.

It is found in the cell inner membrane. It catalyses the reaction ATP + H2O + 4 H(+)(in) = ADP + phosphate + 5 H(+)(out). In terms of biological role, produces ATP from ADP in the presence of a proton gradient across the membrane. The alpha chain is a regulatory subunit. The polypeptide is ATP synthase subunit alpha (Proteus mirabilis (strain HI4320)).